The primary structure comprises 73 residues: Dermaseptin-H4 (73 aa).

A signal peptide spans 1-22; that stretch reads MAFMKKSLFLVLFLGMVSLSIC. Positions 23-43 are excised as a propeptide; that stretch reads EEEKRENEDEAKQEDDEQSEM. The segment at 25–45 is disordered; that stretch reads EKRENEDEAKQEDDEQSEMKR. A compositionally biased stretch (acidic residues) spans 30-40; it reads EDEAKQEDDEQ. A Leucine amide modification is found at Leu-70. A propeptide spanning residues 72-73 is cleaved from the precursor; the sequence is EQ.

In terms of tissue distribution, expressed by the skin glands.

It is found in the secreted. In terms of biological role, has antibacterial activity against the Gram-negative bacteria E.coli ATCC 11775 (MIC=0.8 uM), and the Gram-positive bacteria S.aureus ATCC 12600 (MIC=0.4 uM) and M.luteus ATCC 49732 (MIC=0.8 uM). Does not inhibit the growth of the fungus C.albicans. Probably acts by disturbing membrane functions with its amphipathic structure. In Pithecopus azureus (Orange-legged monkey tree frog), this protein is Dermaseptin-H4.